Reading from the N-terminus, the 256-residue chain is Pimeloyl-[acyl-carrier protein] methyl ester esterase (256 aa).

Residues 15 to 242 (HLVLLHGWGL…AAHAPFISHP (228 aa)) enclose the AB hydrolase-1 domain. Substrate contacts are provided by residues tryptophan 22, 82-83 (SL), and 143-147 (FLALQ). The active-site Nucleophile is serine 82. Residues aspartate 207 and histidine 235 contribute to the active site. Histidine 235 is a binding site for substrate.

The protein belongs to the AB hydrolase superfamily. Carboxylesterase BioH family. Monomer.

It is found in the cytoplasm. The catalysed reaction is 6-carboxyhexanoyl-[ACP] methyl ester + H2O = 6-carboxyhexanoyl-[ACP] + methanol + H(+). It participates in cofactor biosynthesis; biotin biosynthesis. The physiological role of BioH is to remove the methyl group introduced by BioC when the pimeloyl moiety is complete. It allows to synthesize pimeloyl-ACP via the fatty acid synthetic pathway through the hydrolysis of the ester bonds of pimeloyl-ACP esters. This Salmonella choleraesuis (strain SC-B67) protein is Pimeloyl-[acyl-carrier protein] methyl ester esterase.